The following is an 881-amino-acid chain: DNA replication helicase (881 aa).

A disordered region spans residues 1-32 (MESADILPGSRGTVDRRCEGSEEKITPPRPVE). Basic and acidic residues predominate over residues 13 to 32 (TVDRRCEGSEEKITPPRPVE). Residue 105 to 112 (GNAGSGKS) coordinates ATP.

This sequence belongs to the herpesviridae helicase family. In terms of assembly, associates with the primase and the primase-associated factor to form the helicase-primase complex.

It localises to the host nucleus. Component of the helicase/primase complex. Unwinds the DNA at the replication forks and generates single-stranded DNA for both leading and lagging strand synthesis. The primase synthesizes short RNA primers on the lagging strand that the polymerase elongates using dNTPs. Possesses helicase-like motifs and therefore may act as the helicase subunit of the complex. The polypeptide is DNA replication helicase (Equus caballus (Horse)).